The primary structure comprises 1169 residues: Rabankyrin-5 (1169 aa).

A2 is modified (N-acetylalanine). Positions S68–E130 constitute a BTB domain. 5 ANK repeats span residues K217–G247, N255–M284, S288–A317, A322–M362, and K366–L396. Phosphoserine is present on S270. The NPF signature appears at N421–F423. ANK repeat units follow at residues W490–L519, H542–A572, R588–D617, D621–V650, D654–V683, K687–C716, C724–S753, D769–A798, E802–V832, Q836–E865, K870–S899, S905–E934, H938–A967, N971–A1001, R1005–L1037, and D1043–V1072. An interaction with RHOD and RAB5A region spans residues V650–A759. The FYVE-type zinc-finger motif lies at W1104–T1164. 8 residues coordinate Zn(2+): C1110, C1113, C1126, C1129, C1134, C1137, C1156, and C1159.

As to quaternary structure, interacts with RAB5A (in GTP-bound form). Interacts with RHOD (independent of GTP-loaded status). Interacts with EHD1. Interacts with VPS26A; the interaction is independent of EHD1 and is indicative for an association with the cargo recognition subcomplex of the retromer complex. As to expression, high expression in whole adult brain and intermediate expression in all other tissues and specific brain regions examined, including fetal brain.

It is found in the cytoplasm. Its subcellular location is the endosome membrane. The protein localises to the early endosome. In terms of biological role, proposed effector of Rab5. Binds to phosphatidylinositol 3-phosphate (PI(3)P). Involved in homotypic early endosome fusion and to a lesser extent in heterotypic fusion of chlathrin-coated vesicles with early endosomes. Involved in macropinocytosis; the function is dependent on Rab5-GTP. Required for correct endosomal localization. Involved in the internalization and trafficking of activated tyrosine kinase receptors such as PDGFRB. Regulates the subcellular localization of the retromer complex in a EHD1-dependent manner. Involved in endosome-to-Golgi transport and biosynthetic transport to late endosomes and lysosomes indicative for a regulation of retromer complex-mediated retrograde transport. This chain is Rabankyrin-5 (ANKFY1), found in Homo sapiens (Human).